The sequence spans 141 residues: MSFFPAQPSDKKAIEEGAAFMPRFDASGLITAVVTDARDGELLMVAHMNEEALRLTLETGIAHYWSRSRGKLWKKGETSGNLQSVVELRTDCDQDALWLKVRVAGDGPTCHTGRRSCFYRQVVAENGDISLAIEGACDHEH.

Asp91 contributes to the Mg(2+) binding site. Cys92 serves as a coordination point for Zn(2+). Residues Asp93 and Asp95 each coordinate Mg(2+). Residues Cys110 and Cys117 each coordinate Zn(2+).

The protein belongs to the PRA-CH family. As to quaternary structure, homodimer. The cofactor is Mg(2+). Zn(2+) serves as cofactor.

It is found in the cytoplasm. It catalyses the reaction 1-(5-phospho-beta-D-ribosyl)-5'-AMP + H2O = 1-(5-phospho-beta-D-ribosyl)-5-[(5-phospho-beta-D-ribosylamino)methylideneamino]imidazole-4-carboxamide. It participates in amino-acid biosynthesis; L-histidine biosynthesis; L-histidine from 5-phospho-alpha-D-ribose 1-diphosphate: step 3/9. Functionally, catalyzes the hydrolysis of the adenine ring of phosphoribosyl-AMP. This Brucella anthropi (strain ATCC 49188 / DSM 6882 / CCUG 24695 / JCM 21032 / LMG 3331 / NBRC 15819 / NCTC 12168 / Alc 37) (Ochrobactrum anthropi) protein is Phosphoribosyl-AMP cyclohydrolase.